The primary structure comprises 514 residues: Butyrophilin subfamily 2 member A2 (514 aa).

Residues 1-29 form the signal peptide; it reads MEPTTSLRSCPIASLLFFLVLSLFVLVSA. Positions 30-142 constitute an Ig-like V-type domain; sequence QFTVIGPAEP…SYDQATMKLM (113 aa). Residues 30-244 lie on the Extracellular side of the membrane; sequence QFTVIGPAEP…ILIPESFVPS (215 aa). N-linked (GlcNAc...) asparagine glycosylation is found at Asn47 and Asn115. 2 disulfide bridges follow: Cys52/Cys126 and Cys166/Cys220. Residues 150–232 form the Ig-like C2-type domain; the sequence is PLIKMKTLED…NNTLLSQEVE (83 aa). A helical transmembrane segment spans residues 245–265; sequence LPLWMVAVAVTLPVVMLILLT. Over 266-514 the chain is Cytoplasmic; the sequence is SGSICLVKKH…PISQSLVRKP (249 aa). Residues 281 to 304 are a coiled coil; that stretch reads ILSAEKEAEYEEKEAARQLQEELR. The 194-residue stretch at 295-488 folds into the B30.2/SPRY domain; it reads AARQLQEELR…LFICPAFTGA (194 aa).

Belongs to the immunoglobulin superfamily. BTN/MOG family. In terms of processing, N-glycosylated. In terms of tissue distribution, widely expressed (at protein level). In the thymus, restricted to the corticomedullary junction, but not confined solely to epithelial cells (at protein level). Significant expression on naive B-cells, splenic natural killer cells, dendritic cells and peritoneal macrophages (at protein level). Negligible expression on naive T-cells up-regulated on activated T-cells (at protein level).

Its subcellular location is the membrane. Its function is as follows. Inhibits the proliferation of CD4 and CD8 T-cells activated by anti-CD3 antibodies, T-cell metabolism and IL2 and IFNG secretion. The protein is Butyrophilin subfamily 2 member A2 (Btn2a2) of Mus musculus (Mouse).